Here is a 437-residue protein sequence, read N- to C-terminus: Vacuolar protein sorting-associated protein 4A (437 aa).

Positions 1-84 (MTTSTLQKAI…RSKEKHGKKP (84 aa)) are interaction with CHMP1B. The 79-residue stretch at 2–80 (TTSTLQKAID…KDYLRSKEKH (79 aa)) folds into the MIT domain. At K8 the chain carries N6-acetyllysine. The tract at residues 75-106 (RSKEKHGKKPVKENQSEGKGSDSDSEGDNPEK) is disordered. The segment covering 84 to 96 (PVKENQSEGKGSD) has biased composition (basic and acidic residues). Residues S95 and S97 each carry the phosphoserine modification. 167–174 (GPPGTGKS) provides a ligand contact to ATP.

The protein belongs to the AAA ATPase family. As to quaternary structure, proposed to be monomeric or homodimeric in nucleotide-free form and to oligomerize upon binding to ATP to form two stacked hexameric or heptameric rings with a central pore through which ESCRT-III substrates are translocated in an ATP-dependent manner. Interacts with CHMP1A, CHMP1B, CHMP2A, CHMP2B, CHMP3, CHMP4A, CHMP4B, CHMP4C and CHMP6. Interacts with VPS4B; the interaction suggests a heteromeric assembly with VPS4B. Interacts with SPAST. Interacts with IST1. Interacts with ZFYVE19/ANCHR; leading to retain it at midbody. Ubiquitously expressed.

The protein localises to the late endosome membrane. The protein resides in the midbody. Its subcellular location is the cytoplasm. It localises to the cytoskeleton. It is found in the spindle. It catalyses the reaction ATP + H2O = ADP + phosphate + H(+). Functionally, involved in late steps of the endosomal multivesicular bodies (MVB) pathway. Recognizes membrane-associated ESCRT-III assemblies and catalyzes their disassembly, possibly in combination with membrane fission. Redistributes the ESCRT-III components to the cytoplasm for further rounds of MVB sorting. MVBs contain intraluminal vesicles (ILVs) that are generated by invagination and scission from the limiting membrane of the endosome and mostly are delivered to lysosomes enabling degradation of membrane proteins, such as stimulated growth factor receptors, lysosomal enzymes and lipids. It is required for proper accomplishment of various processes including the regulation of endosome size, primary cilium organization, mitotic spindle organization, chromosome segregation, and nuclear envelope sealing and spindle disassembly during anaphase. Involved in cytokinesis: retained at the midbody by ZFYVE19/ANCHR and CHMP4C until abscission checkpoint signaling is terminated at late cytokinesis. It is then released following dephosphorylation of CHMP4C, leading to abscission. VPS4A/B are required for the exosomal release of SDCBP, CD63 and syndecan. Critical for normal erythroblast cytokinesis and correct erythropoiesis. (Microbial infection) In conjunction with the ESCRT machinery also appears to function in topologically equivalent membrane fission events, such as the terminal stages of cytokinesis and enveloped virus budding (HIV-1 and other lentiviruses). This is Vacuolar protein sorting-associated protein 4A from Homo sapiens (Human).